We begin with the raw amino-acid sequence, 226 residues long: Thiopurine S-methyltransferase (226 aa).

Residues Trp10, Leu47, Glu68, and Arg130 each coordinate S-adenosyl-L-methionine.

It belongs to the class I-like SAM-binding methyltransferase superfamily. TPMT family.

The protein localises to the cytoplasm. The catalysed reaction is S-adenosyl-L-methionine + a thiopurine = S-adenosyl-L-homocysteine + a thiopurine S-methylether.. In Shewanella sediminis (strain HAW-EB3), this protein is Thiopurine S-methyltransferase.